We begin with the raw amino-acid sequence, 343 residues long: S-adenosylmethionine:tRNA ribosyltransferase-isomerase (343 aa).

Belongs to the QueA family. In terms of assembly, monomer.

The protein localises to the cytoplasm. The catalysed reaction is 7-aminomethyl-7-carbaguanosine(34) in tRNA + S-adenosyl-L-methionine = epoxyqueuosine(34) in tRNA + adenine + L-methionine + 2 H(+). It participates in tRNA modification; tRNA-queuosine biosynthesis. Its function is as follows. Transfers and isomerizes the ribose moiety from AdoMet to the 7-aminomethyl group of 7-deazaguanine (preQ1-tRNA) to give epoxyqueuosine (oQ-tRNA). The polypeptide is S-adenosylmethionine:tRNA ribosyltransferase-isomerase (Borreliella burgdorferi (strain ATCC 35210 / DSM 4680 / CIP 102532 / B31) (Borrelia burgdorferi)).